A 540-amino-acid chain; its full sequence is Chaperonin GroEL (540 aa).

Residues 29–32, 86–90, G413, 476–478, and D492 contribute to the ATP site; these read TLGP, DGTTT, and NAA.

It belongs to the chaperonin (HSP60) family. In terms of assembly, forms a cylinder of 14 subunits composed of two heptameric rings stacked back-to-back. Interacts with the co-chaperonin GroES.

The protein resides in the cytoplasm. The enzyme catalyses ATP + H2O + a folded polypeptide = ADP + phosphate + an unfolded polypeptide.. Functionally, together with its co-chaperonin GroES, plays an essential role in assisting protein folding. The GroEL-GroES system forms a nano-cage that allows encapsulation of the non-native substrate proteins and provides a physical environment optimized to promote and accelerate protein folding. This is Chaperonin GroEL from Streptococcus agalactiae.